Consider the following 418-residue polypeptide: MIISKNRKLVVGLEIGTTKVVTLVGEVLTNGKIKIIGIGICQSNGIDKGRINNLDAVISCIRESIHQAEIMANCQITSVYLSLSSKYINCQNEIGIVPISEDEVTKEDIENVIHTAKSVKILNEHHILHVIPQEYSIDQQSGIKNPIGLSGTRMQVRVHLITCHQNMAKNIIKAVEKCDIKVDQVIFSGLASSKAVLTEDECKLGVCMIDIGGGTIDLITYIDGSIQDSQVIPYAGNIVTKDISYAFSTSYSDSEKIKIKYGSAIKLSPGTSKNIDLSSKYGNFQKNLQQDTVIEVIESRYNELLHLINNRILYVQKKLYKEGRKYQLTGGIVLTGGASTISFLTECAEKIFQKKIRIAKPLNISGLTDNVTEPHYSTVVGLLHYGKEFYFDDTNQKREISFIEKWFQKISNWFKKEF.

This sequence belongs to the FtsA/MreB family. In terms of assembly, self-interacts. Interacts with FtsZ.

It is found in the cell inner membrane. Functionally, cell division protein that is involved in the assembly of the Z ring. May serve as a membrane anchor for the Z ring. The protein is Cell division protein FtsA of Buchnera aphidicola subsp. Schizaphis graminum (strain Sg).